A 71-amino-acid chain; its full sequence is Sec-independent protein translocase protein TatA (71 aa).

Residues Met1 to Gly21 traverse the membrane as a helical segment. Positions Ala47–Ser71 are disordered. The span at Glu49–Ser71 shows a compositional bias: basic and acidic residues.

It belongs to the TatA/E family. As to quaternary structure, the Tat system comprises two distinct complexes: a TatABC complex, containing multiple copies of TatA, TatB and TatC subunits, and a separate TatA complex, containing only TatA subunits. Substrates initially bind to the TatABC complex, which probably triggers association of the separate TatA complex to form the active translocon.

Its subcellular location is the cell inner membrane. Functionally, part of the twin-arginine translocation (Tat) system that transports large folded proteins containing a characteristic twin-arginine motif in their signal peptide across membranes. TatA could form the protein-conducting channel of the Tat system. The chain is Sec-independent protein translocase protein TatA from Chelativorans sp. (strain BNC1).